A 301-amino-acid chain; its full sequence is Acetylglutamate kinase (301 aa).

Residues 72 to 73 (GG), R94, and N199 contribute to the substrate site.

Belongs to the acetylglutamate kinase family. ArgB subfamily.

The protein localises to the cytoplasm. It catalyses the reaction N-acetyl-L-glutamate + ATP = N-acetyl-L-glutamyl 5-phosphate + ADP. The protein operates within amino-acid biosynthesis; L-arginine biosynthesis; N(2)-acetyl-L-ornithine from L-glutamate: step 2/4. In terms of biological role, catalyzes the ATP-dependent phosphorylation of N-acetyl-L-glutamate. This chain is Acetylglutamate kinase, found in Bartonella quintana (strain Toulouse) (Rochalimaea quintana).